Reading from the N-terminus, the 557-residue chain is Urocanate hydratase (557 aa).

NAD(+) is bound by residues 53 to 54 (GG), Gln-131, 177 to 179 (GMG), Glu-197, Arg-202, 243 to 244 (NA), 264 to 268 (QTSAH), 274 to 275 (YL), and Tyr-323. Cys-411 is an active-site residue. Position 493 (Gly-493) interacts with NAD(+).

This sequence belongs to the urocanase family. NAD(+) serves as cofactor.

Its subcellular location is the cytoplasm. The enzyme catalyses 4-imidazolone-5-propanoate = trans-urocanate + H2O. Its pathway is amino-acid degradation; L-histidine degradation into L-glutamate; N-formimidoyl-L-glutamate from L-histidine: step 2/3. Functionally, catalyzes the conversion of urocanate to 4-imidazolone-5-propionate. This is Urocanate hydratase from Pseudomonas putida (strain GB-1).